A 695-amino-acid chain; its full sequence is MDKVLNREESMELMDLLGLERAAWGNLPLMRKAYLRKCKEFHPDKGGDEDKMKRMNTLYKKMEQDVKVAHQPDFGTWSSSEVPTYGTEEWESWWSSFNEKWDEDLFCHEDMFASDEEATADSQHSTPPKKKRKVEDPKDFPSDLHQFLSQAVFSNRTLACFAVYTTKEKAQILYKKLMEKYSVTFISRHMCAGHNIIFFLTPHRHRVSAINNFCQKLCTFSFLICKGVNKEYLLYSALTRDPYHTIEESIQGGLKEHDFSPEEPEETKQVSWKLITEYAVETKCEDVFLLLGMYLEFQYNVEECKKCQKKDQPYHFKYHEKHFANAIIFAESKNQKSICQQAVDTVLAKKRVDTLHMTREEMLTERFNHILDKMDLIFGAHGNAVLEQYMAGVAWLHCLLPKMDSVIFDFLHCIVFNVPKRRYWLFKGPIDSGKTTLAAGLLDLCGGKALNVNLPMERLTFELGVAIDQYMVVFEDVKGTGAESKDLPSGHGINNLDSLRDYLDGSVKVNLEKKHLNKRTQIFPPGLVTMNEYPVPKTLQARFVRQIDFRPKIYLRKSLQNSEFLLEKRILQSGMTLLLLLIWFRPVADFATDIQSRIVEWKERLDSEISMYTFSRMKYNICMGKCILDITREEDSETEDSGHGSSTESQSQCSSQVSDTSAPAEDSQRSDPHSQELHLCKGFQCFKRPKTPPPK.

M1 bears the N-acetylmethionine; by host mark. The 64-residue stretch at 12–75 (ELMDLLGLER…VKVAHQPDFG (64 aa)) folds into the J domain. Residues 105–109 (LFCHE) are binding to host RB1 protein and transforming activity. S114, S122, and S125 each carry phosphoserine; by host. The interval 117–138 (EATADSQHSTPPKKKRKVEDPK) is disordered. T126 is modified (phosphothreonine; by host). Positions 127–134 (PPKKKRKV) match the Nuclear localization signal motif. Residues 141–256 (PSDLHQFLSQ…EESIQGGLKE (116 aa)) constitute a DNA-binding region (T-ag OBD). The segment at 267–359 (TKQVSWKLIT…KRVDTLHMTR (93 aa)) adopts a T-ag D1-type zinc-finger fold. Zn(2+) is bound by residues C304, C307, H315, and H319. The 161-residue stretch at 402–562 (KMDSVIFDFL…IYLRKSLQNS (161 aa)) folds into the SF3 helicase domain. 428-435 (GPIDSGKT) lines the ATP pocket. Residues 634 to 695 (EDSETEDSGH…FKRPKTPPPK (62 aa)) are disordered. The span at 645 to 661 (SSTESQSQCSSQVSDTS) shows a compositional bias: low complexity. A compositionally biased stretch (basic and acidic residues) spans 666–679 (DSQRSDPHSQELHL). N6-acetyllysine; by host is present on K687. A Phosphothreonine; by host modification is found at T691.

In terms of assembly, forms homohexamers in the presence of ATP. Interacts with host HDAC1. Interacts (via LXCXE domain) with host RB1; the interaction induces the aberrant dissociation of RB1-E2F1 complex thereby disrupting RB1's activity. Interacts (via LXCXE domain) with host pRB-related proteins RBL1 and RBL2. Interacts (via C-terminus) with host TOP1 and POLA1 allowing DNA replication. Interacts with host TP53, inhibiting TP53 binding to DNA. Interacts with host preinitiation complex components TBP, TFIIA and TFIID to regulate transcription initiation. Mg(2+) is required as a cofactor. Post-translationally, phosphorylated on both serine and threonine residues. Small t antigen inhibits the dephosphorylation by the AC form of PP2A. O-Glycosylated near the C-terminal region. In terms of processing, acetylated by CBP in a TP53-dependent manner.

Its subcellular location is the host nucleus. The enzyme catalyses Couples ATP hydrolysis with the unwinding of duplex DNA by translocating in the 3'-5' direction.. The catalysed reaction is ATP + H2O = ADP + phosphate + H(+). Functionally, isoform large T antigen is a key early protein essential for both driving viral replication and inducing cellular transformation. Plays a role in viral genome replication by driving entry of quiescent cells into the cell cycle and by autoregulating the synthesis of viral early mRNA. Displays highly oncogenic activities by corrupting the host cellular checkpoint mechanisms that guard cell division and the transcription, replication, and repair of DNA. Participates in the modulation of cellular gene expression preceeding viral DNA replication. This step involves binding to host key cell cycle regulators retinoblastoma protein RB1/pRb and TP53. Induces the disassembly of host E2F1 transcription factors from RB1, thus promoting transcriptional activation of E2F1-regulated S-phase genes. Inhibits host TP53 binding to DNA, abrogating the ability of TP53 to stimulate gene expression. Plays the role of a TFIID-associated factor (TAF) in transcription initiation for all three RNA polymerases, by stabilizing the TBP-TFIIA complex on promoters. Initiates viral DNA replication and unwinding via interactions with the viral origin of replication. Binds two adjacent sites in the SV40 origin. The replication fork movement is facilitated by Large T antigen helicase activity. Has processive 3'-5' DNA helicase activity which requires a short 3' single-stranded region and ATP. Activates the transcription of viral late mRNA, through host TBP and TFIIA stabilization. Interferes with histone deacetylation mediated by HDAC1, leading to activation of transcription. This BK polyomavirus (BKPyV) protein is Large T antigen.